Consider the following 154-residue polypeptide: Myoglobin (154 aa).

A Globin domain is found at valine 2–lysine 148. Residue serine 4 is modified to Phosphoserine. Histidine 65 is a binding site for nitrite. An O2-binding site is contributed by histidine 65. Phosphothreonine is present on threonine 68. Histidine 94 serves as a coordination point for heme b.

The protein belongs to the globin family. In terms of assembly, monomeric.

It localises to the cytoplasm. The protein localises to the sarcoplasm. It carries out the reaction Fe(III)-heme b-[protein] + nitric oxide + H2O = Fe(II)-heme b-[protein] + nitrite + 2 H(+). It catalyses the reaction H2O2 + AH2 = A + 2 H2O. In terms of biological role, monomeric heme protein which primary function is to store oxygen and facilitate its diffusion within muscle tissues. Reversibly binds oxygen through a pentacoordinated heme iron and enables its timely and efficient release as needed during periods of heightened demand. Depending on the oxidative conditions of tissues and cells, and in addition to its ability to bind oxygen, it also has a nitrite reductase activity whereby it regulates the production of bioactive nitric oxide. Under stress conditions, like hypoxia and anoxia, it also protects cells against reactive oxygen species thanks to its pseudoperoxidase activity. The sequence is that of Myoglobin (MB) from Kogia breviceps (Pygmy sperm whale).